The chain runs to 206 residues: Small ribosomal subunit protein uS4 (206 aa).

The region spanning 96-156 (RRLDNVVYRM…EKSKNQLRIK (61 aa)) is the S4 RNA-binding domain.

This sequence belongs to the universal ribosomal protein uS4 family. As to quaternary structure, part of the 30S ribosomal subunit. Contacts protein S5. The interaction surface between S4 and S5 is involved in control of translational fidelity.

Functionally, one of the primary rRNA binding proteins, it binds directly to 16S rRNA where it nucleates assembly of the body of the 30S subunit. In terms of biological role, with S5 and S12 plays an important role in translational accuracy. The protein is Small ribosomal subunit protein uS4 of Hahella chejuensis (strain KCTC 2396).